The primary structure comprises 561 residues: Zinc finger protein 394 (561 aa).

Ser12 carries the phosphoserine modification. Residue Lys40 forms a Glycyl lysine isopeptide (Lys-Gly) (interchain with G-Cter in SUMO2) linkage. A disordered region spans residues 43 to 62 (EDSLGSWEPSYPAASPDPET). Residues 64 to 146 (RLHFRQLRYQ…AVVRALQRAL (83 aa)) form the SCAN box domain. The KRAB domain occupies 155–230 (VTFEDMAVSL…LQEAFQGKRP (76 aa)). Residues Lys203 and Lys228 each participate in a glycyl lysine isopeptide (Lys-Gly) (interchain with G-Cter in SUMO2) cross-link. Positions 238-247 (THEDRVEKQS) are enriched in basic and acidic residues. The segment at 238 to 283 (THEDRVEKQSGDPLPLKLENSPEAEGFNSISDVNKNGSIEGEDSKN) is disordered. A Glycyl lysine isopeptide (Lys-Gly) (interchain with G-Cter in SUMO2) cross-link involves residue Lys254. A compositionally biased stretch (polar residues) spans 265–274 (NSISDVNKNG). Lys282 participates in a covalent cross-link: Glycyl lysine isopeptide (Lys-Gly) (interchain with G-Cter in SUMO2). C2H2-type zinc fingers lie at residues 358 to 380 (YKCGNCGKSFKQRSDLFRHQRIH), 386 to 408 (YGCQECGKSFSQSAALTKHQRTH), 414 to 436 (YTCLKCGERFRQNSHLNRHQSTH), 442 to 463 (FKCEECGETCHISNLFRHQRLH), 469 to 491 (YKCEECEKSFKQRSDLFKHHRIH), 497 to 519 (YGCSVCGKRFNQSATLIKHQRIH), and 525 to 547 (YKCLECGERFRQSTHLIRHQRIH). A Glycyl lysine isopeptide (Lys-Gly) (interchain with G-Cter in SUMO2) cross-link involves residue Lys443.

This sequence belongs to the krueppel C2H2-type zinc-finger protein family.

The protein localises to the nucleus. May be involved in transcriptional regulation. This is Zinc finger protein 394 (ZNF394) from Pan paniscus (Pygmy chimpanzee).